A 353-amino-acid polypeptide reads, in one-letter code: Heat-inducible transcription repressor HrcA (353 aa).

The protein belongs to the HrcA family.

Negative regulator of class I heat shock genes (grpE-dnaK-dnaJ and groELS operons). Prevents heat-shock induction of these operons. The protein is Heat-inducible transcription repressor HrcA of Synechococcus elongatus (strain ATCC 33912 / PCC 7942 / FACHB-805) (Anacystis nidulans R2).